Here is a 121-residue protein sequence, read N- to C-terminus: Secretin (121 aa).

The first 18 residues, 1-18 (MAPRPLLLLLLLLGGSAA), serve as a signal peptide directing secretion. Residues 19 to 26 (RPAPPRAR) constitute a propeptide that is removed on maturation. At V54 the chain carries Valine amide. At S58 the chain carries Phosphoserine. A propeptide spanning residues 58-121 (SEQDAENSMA…AAAEGTLRPR (64 aa)) is cleaved from the precursor.

It belongs to the glucagon family.

It is found in the secreted. Functionally, hormone involved in different processes, such as regulation of the pH of the duodenal content, food intake and water homeostasis. Exerts its biological effects by binding to secretin receptor (SCTR), a G-protein coupled receptor expressed in the basolateral domain of several cells. Acts as a key gastrointestinal hormone by regulating the pH of the duodenal content. Secreted by S cells of the duodenum in the crypts of Lieberkuehn and regulates the pH of the duodenum by (1) inhibiting the secretion of gastric acid from the parietal cells of the stomach and (2) stimulating the production of bicarbonate (NaHCO(3)) from the ductal cells of the pancreas. Production of bicarbonate is essential to neutralize the pH and ensure no damage is done to the small intestine by the gastric acid. In addition to regulating the pH of the duodenal content, plays a central role in diet induced thermogenesis: acts as a non-sympathetic brown fat (BAT) activator mediating prandial thermogenesis, which consequentially induces satiation. Mechanistically, secretin released by the gut after a meal binds to secretin receptor (SCTR) in brown adipocytes, activating brown fat thermogenesis by stimulating lipolysis, which is sensed in the brain and promotes satiation. Also able to stimulate lipolysis in white adipocytes. Also plays an important role in cellular osmoregulation: released into the systemic circulation in response to hyperosmolality and acts at different levels in the hypothalamus, pituitary and kidney to regulate water homeostasis. Also plays a role in the central nervous system, possibly by acting as a neuropeptide hormone: required for hippocampal synaptic function and neural progenitor cells maintenance. This Homo sapiens (Human) protein is Secretin.